Reading from the N-terminus, the 299-residue chain is Glutamate formimidoyltransferase (299 aa).

His82 acts as the For formimidoyltransferase activity in catalysis. 163–172 (GDRKIHPTAG) lines the folate pocket.

The protein belongs to the formiminotransferase family.

The protein resides in the cytoplasm. The enzyme catalyses (6S)-5-formyl-5,6,7,8-tetrahydrofolate + L-glutamate = N-formyl-L-glutamate + (6S)-5,6,7,8-tetrahydrofolate + H(+). The catalysed reaction is 5-formimidoyltetrahydrofolate + L-glutamate = N-formimidoyl-L-glutamate + (6S)-5,6,7,8-tetrahydrofolate. It catalyses the reaction (6S)-5-formyl-5,6,7,8-tetrahydrofolate + ATP = (6R)-5,10-methenyltetrahydrofolate + ADP + phosphate. It functions in the pathway amino-acid degradation; L-histidine degradation into L-glutamate; L-glutamate from N-formimidoyl-L-glutamate (transferase route): step 1/1. It participates in one-carbon metabolism; tetrahydrofolate interconversion. Catalyzes the transfer of the formyl group from N-formylglutamate to tetrahydrofolate (THF) to yield 5-formyltetrahydrofolate (5-CHO-THF) and glutamate (Glu). The triglutamate form of 5-CHO-THF (5-CHO-THF-Glu3) can also be used as substrate. It can also catalyze the transfer of the formimino group from N-formiminoglutamate to tetrahydrofolate (THF) to yield 5-formiminotetrahydrofolate (5-NH=CH-THF) and glutamate (Glu). It can replace YgfA to catalyze the irreversible ATP-dependent transformation of 5-CHO-THF to form 5,10-methenyltetrahydrofolate (5,10-CH=THF). The protein is Glutamate formimidoyltransferase of Streptococcus pyogenes serotype M1.